The following is a 720-amino-acid chain: Pro-neuregulin-3, membrane-bound isoform (720 aa).

The Extracellular portion of the chain corresponds to M1–Q360. 3 disordered regions span residues A28–P48, S119–S223, and P246–S280. Positions A34–G44 are enriched in gly residues. Residues T127–S148 show a composition bias toward low complexity. The span at R149–R163 shows a compositional bias: polar residues. 2 stretches are compositionally biased toward low complexity: residues T187 to T205 and A250 to S271. In terms of domain architecture, EGF-like spans H286–D329. Cystine bridges form between C290–C304, C298–C317, and C319–C328. A helical membrane pass occupies residues V361–F381. Topologically, residues Y382–K720 are cytoplasmic. Residues P451–Q481 form a disordered region.

Belongs to the neuregulin family. As to quaternary structure, interacts with ERBB4. Proteolytic cleavage close to the plasma membrane on the external face leads to the release of the soluble growth factor form. In terms of processing, extensive glycosylation precedes the proteolytic cleavage. Isoform 3 is glycosylated. Highly expressed in most regions of the brain with the exception of corpus callosum. Expressed at lower level in testis. Not detected in heart, placenta, lung, liver, skeletal muscle, kidney, pancreas, spleen, thymus, prostate, ovary, small intestine, colon and peripheral blood leukocytes.

The protein localises to the cell membrane. It localises to the secreted. In terms of biological role, direct ligand for the ERBB4 tyrosine kinase receptor. Binding results in ligand-stimulated tyrosine phosphorylation and activation of the receptor. Does not bind to the EGF receptor, ERBB2 or ERBB3 receptors. May be a survival factor for oligodendrocytes. In Homo sapiens (Human), this protein is Pro-neuregulin-3, membrane-bound isoform (NRG3).